Consider the following 662-residue polypeptide: Transmembrane 9 superfamily member 2 (662 aa).

A signal peptide spans 1–28 (MSSRPPASPPAQGSRLLLLSLLLLGTVP). The Lumenal portion of the chain corresponds to 29-299 (GPRPGSAFYL…LESMPHTHIQ (271 aa)). A helical membrane pass occupies residues 300 to 320 (WFSIMNSLVIVLFLSGMVAMI). Residues 321–373 (MLRTLHKDIARYNQMDSTEDAQEEFGWKLVHGDIFRPPRKGMLLSVFLGSGTQ) lie on the Cytoplasmic side of the membrane. A helical transmembrane segment spans residues 374–394 (ILIMTFVTLFFACLGFLSPAN). The Lumenal segment spans residues 395–397 (RGA). Residues 398–418 (LMTCAVVLWVLLGTPAGYVAA) form a helical membrane-spanning segment. Topologically, residues 419 to 436 (RFYKSFGGEKWKTNVLLT) are cytoplasmic. The chain crosses the membrane as a helical span at residues 437-457 (SFLCPGIVFADFFIMNLILWG). At 458-465 (EGSSAAIP) the chain is on the lumenal side. The helical transmembrane segment at 466-486 (FGTLVAILALWFCISVPLTFI) threads the bilayer. Residues 487–521 (GAYFGFKKNAIEHPVRTNQIPRQIPEQSFYTKPLP) lie on the Cytoplasmic side of the membrane. Residues 522-542 (GIIMGGILPFGCIFIQLFFIL) form a helical membrane-spanning segment. The Lumenal segment spans residues 543-553 (NSIWSHQMYYM). The helical transmembrane segment at 554 to 574 (FGFLFLVFIILVITCSEATIL) threads the bilayer. Topologically, residues 575-590 (LCYFHLCAEDYHWQWR) are cytoplasmic. Residues 591–611 (SFLTSGFTAVYFLIYAIHYFF) form a helical membrane-spanning segment. At 612–630 (SKLQITGTASTILYFGYTM) the chain is on the lumenal side. The chain crosses the membrane as a helical span at residues 631–651 (IMVLIFFLFTGTIGFFACFWF). The Cytoplasmic portion of the chain corresponds to 652-662 (VTKIYSVVKVD).

The protein belongs to the nonaspanin (TM9SF) (TC 9.A.2) family.

The protein localises to the endosome membrane. The protein resides in the golgi outpost. Its subcellular location is the cytoplasm. It is found in the cytoskeleton. It localises to the microtubule organizing center. Its function is as follows. In the intracellular compartments, may function as a channel or small molecule transporter. The chain is Transmembrane 9 superfamily member 2 (Tm9sf2) from Mus musculus (Mouse).